We begin with the raw amino-acid sequence, 388 residues long: 2-epi-5-epi-valiolone synthase (388 aa).

NAD(+) contacts are provided by residues 92-95 (ERNK), 124-128 (GIVAD), 148-149 (TT), lysine 161, lysine 170, and 188-191 (LLAT). Positions 203, 267, and 283 each coordinate Zn(2+).

Belongs to the sugar phosphate cyclases superfamily. EEVS-like family. Requires NAD(+) as cofactor. The cofactor is Co(2+). It depends on Zn(2+) as a cofactor.

It catalyses the reaction D-sedoheptulose 7-phosphate = 2-epi-5-epi-valiolone + phosphate. Catalyzes the cyclization of D-sedoheptulose 7-phosphate to 2-epi-5-epi-valiolone. Probably involved in acarbose biosynthesis. The protein is 2-epi-5-epi-valiolone synthase of Streptomyces glaucescens.